The following is a 113-amino-acid chain: Single-stranded DNA-binding protein B (113 aa).

The region spanning 1-104 (MFNQVMLVGR…VLADTVRFMD (104 aa)) is the SSB domain. Residue Tyr-82 is modified to Phosphotyrosine.

Homotetramer. In terms of processing, phosphorylated by YwqD, which increases ssDNA affinity; dephosphorylated by YwqE.

Its subcellular location is the cytoplasm. Functionally, not essential for replication of the chromosome, but is required for optimal competence. Binds ssDNA, binding is facilitated by DprA, acts as an accessory factor for homologous DNA strand exchange. In Bacillus subtilis (strain 168), this protein is Single-stranded DNA-binding protein B (ssbB).